Here is a 402-residue protein sequence, read N- to C-terminus: Nicotinate phosphoribosyltransferase (402 aa).

His221 carries the post-translational modification Phosphohistidine; by autocatalysis.

The protein belongs to the NAPRTase family. In terms of processing, transiently phosphorylated on a His residue during the reaction cycle. Phosphorylation strongly increases the affinity for substrates and increases the rate of nicotinate D-ribonucleotide production. Dephosphorylation regenerates the low-affinity form of the enzyme, leading to product release.

It catalyses the reaction nicotinate + 5-phospho-alpha-D-ribose 1-diphosphate + ATP + H2O = nicotinate beta-D-ribonucleotide + ADP + phosphate + diphosphate. It functions in the pathway cofactor biosynthesis; NAD(+) biosynthesis; nicotinate D-ribonucleotide from nicotinate: step 1/1. Functionally, catalyzes the synthesis of beta-nicotinate D-ribonucleotide from nicotinate and 5-phospho-D-ribose 1-phosphate at the expense of ATP. In Sodalis glossinidius (strain morsitans), this protein is Nicotinate phosphoribosyltransferase.